The following is a 304-amino-acid chain: UTP--glucose-1-phosphate uridylyltransferase 1 (304 aa).

Belongs to the UDPGP type 2 family.

The catalysed reaction is alpha-D-glucose 1-phosphate + UTP + H(+) = UDP-alpha-D-glucose + diphosphate. The protein operates within carbohydrate metabolism; nucleotide-sugar metabolism. This is UTP--glucose-1-phosphate uridylyltransferase 1 (hasC1) from Streptococcus pyogenes serotype M18 (strain MGAS8232).